The sequence spans 339 residues: Ferrochelatase (339 aa).

His-202 and Glu-283 together coordinate Fe cation.

Belongs to the ferrochelatase family.

Its subcellular location is the cytoplasm. The catalysed reaction is heme b + 2 H(+) = protoporphyrin IX + Fe(2+). It participates in porphyrin-containing compound metabolism; protoheme biosynthesis; protoheme from protoporphyrin-IX: step 1/1. Catalyzes the ferrous insertion into protoporphyrin IX. This Psychrobacter cryohalolentis (strain ATCC BAA-1226 / DSM 17306 / VKM B-2378 / K5) protein is Ferrochelatase.